The following is a 110-amino-acid chain: Ribonuclease P protein component 1 (110 aa).

This sequence belongs to the eukaryotic/archaeal RNase P protein component 1 family. In terms of assembly, consists of a catalytic RNA component and at least 4-5 protein subunits.

The protein localises to the cytoplasm. It catalyses the reaction Endonucleolytic cleavage of RNA, removing 5'-extranucleotides from tRNA precursor.. Functionally, part of ribonuclease P, a protein complex that generates mature tRNA molecules by cleaving their 5'-ends. In Aeropyrum pernix (strain ATCC 700893 / DSM 11879 / JCM 9820 / NBRC 100138 / K1), this protein is Ribonuclease P protein component 1.